Consider the following 241-residue polypeptide: 3-deoxy-D-manno-octulosonic acid kinase (241 aa).

The active site involves Asp-171.

It belongs to the protein kinase superfamily. KdkA/RfaP family.

It is found in the cell inner membrane. The catalysed reaction is an alpha-Kdo-(2-&gt;6)-lipid IVA + ATP = a 4-O-phospho-alpha-Kdo-(2-&gt;6)-lipid IVA + ADP + H(+). Its pathway is bacterial outer membrane biogenesis; LPS core biosynthesis. In terms of biological role, catalyzes the ATP-dependent phosphorylation of the 3-deoxy-D-manno-octulosonic acid (Kdo) residue in Kdo-lipid IV(A) at the 4-OH position. The polypeptide is 3-deoxy-D-manno-octulosonic acid kinase (Haemophilus influenzae (strain 86-028NP)).